A 367-amino-acid chain; its full sequence is Ribosomal lysine N-methyltransferase 5 (367 aa).

Residues 55-74 form a disordered region; sequence EGGRKKKRVRRRNKASSVEE. Residues 58 to 68 show a composition bias toward basic residues; the sequence is RKKKRVRRRNK. S-adenosyl-L-methionine contacts are provided by residues Trp-110, 170-172, Asp-192, Trp-256, and Met-288; that span reads GAG.

This sequence belongs to the class I-like SAM-binding methyltransferase superfamily. RKM5 family.

Its function is as follows. S-adenosyl-L-methionine-dependent protein-lysine N-methyltransferase that monomethylates 60S ribosomal protein L1 (RPL1A and RPL1B) at 'Lys-46'. In Saccharomyces cerevisiae (strain Lalvin EC1118 / Prise de mousse) (Baker's yeast), this protein is Ribosomal lysine N-methyltransferase 5 (RKM5).